A 518-amino-acid chain; its full sequence is Allene oxide synthase, chloroplastic (518 aa).

The transit peptide at 1 to 33 (MASISTPFPISLHPKTVRSKPLKFRVLTRPIKA) directs the protein to the chloroplast. K133, H164, and K168 together coordinate heme b. (13S)-hydroperoxy-(9Z,11E)-octadecadienoate contacts are provided by N321 and T389. 2 residues coordinate (13S)-hydroperoxy-(9Z,11E,15Z)-octadecatrienoate: N321 and T389. Positions 469 and 471 each coordinate heme b.

Belongs to the cytochrome P450 family. The cofactor is heme b.

It localises to the plastid. The protein localises to the chloroplast. The protein resides in the plastoglobule. The enzyme catalyses (13S)-hydroperoxy-(9Z,11E,15Z)-octadecatrienoate = (9Z,13S,15Z)-12,13-epoxyoctadeca-9,11,15-trienoate + H2O. The catalysed reaction is (13S)-hydroperoxy-(9Z,11E)-octadecadienoate = (9Z,13S)-12,13-epoxyoctadeca-9,11-dienoate + H2O. Its pathway is lipid metabolism; oxylipin biosynthesis. Functionally, cytochrome P450 enzyme involved in the biosynthesis of oxylipin jasmonates, important phytohormones acting as growth regulators and signaling molecules for plant defense. Functions as an allene oxide synthase that converts hydroperoxy fatty acids to unstable allene epoxides. Catalyzes the dehydration of 13-HPOTE ((13S)-hydroperoxy-(9Z,11E,15Z)-octadecatrienoate), as well as 13-HPODE ((13S)-hydroperoxy-(9Z,11E)-octadecadienoate). In Arabidopsis thaliana (Mouse-ear cress), this protein is Allene oxide synthase, chloroplastic (CYP74A).